The primary structure comprises 292 residues: NAD kinase (292 aa).

Residue aspartate 73 is the Proton acceptor of the active site. Residues 73–74 (DG), 147–148 (NE), histidine 158, arginine 175, aspartate 177, 188–193 (TAYSLS), and glutamine 247 contribute to the NAD(+) site.

It belongs to the NAD kinase family. It depends on a divalent metal cation as a cofactor.

It is found in the cytoplasm. It carries out the reaction NAD(+) + ATP = ADP + NADP(+) + H(+). Involved in the regulation of the intracellular balance of NAD and NADP, and is a key enzyme in the biosynthesis of NADP. Catalyzes specifically the phosphorylation on 2'-hydroxyl of the adenosine moiety of NAD to yield NADP. The polypeptide is NAD kinase (Shigella boydii serotype 18 (strain CDC 3083-94 / BS512)).